The following is a 555-amino-acid chain: MLLFLSVPQPRPPGARTRAGAARVARWRRLRLQQLRRLRGLLRVLRGRPGAGSRRRGRMALCGQAAGAASLPSELIVHIFSFLPAPDRLRASASCSHWRECLFYPALWPQLRICLRVSPAEQPRLEFLMRKCGWFVRELRVEFAAENYLSGGGPGDGGGADTGTGGEEVEALQLSARWLEVLRTYLELVLCVLVSIRNNRNLQKFSLFGDISVLQQQGSLSNTYLSKVDPDGKKIKQIQQLFEEILSNSRQLKWLSCGFMLEIVTPTSLSSLSNAVANTMEHLSLLDNNIPGNSTLITAVELERFVNLHSLALDFCDFTAEMARVLTDSNHVPLQRLSLLVHNVSVMHKSLDNMPNDEHWKALSRKSTSFRVYIMAFDIKSEDMLKILKPSIPLERIHFDSYITCVSGAIVDLISRQYDKFLTHFILMNDVIDTSGFPDLSDNRNEDPLVLLAWRCTKLSLLAIHGYTVWAHNLIAIARLRGSDLKVLEVTEESIDFDQGELADQDVDPVHNLIEQVSLGLGQPWHAVMDIESLSVFTEPNRHFYREMQSFSEDI.

In terms of domain architecture, F-box spans 65 to 111; that stretch reads AAGAASLPSELIVHIFSFLPAPDRLRASASCSHWRECLFYPALWPQL.

In terms of assembly, part of the SCF (SKP1-CUL1-F-box) E3 ubiquitin-protein ligase complex SCF(FBXO33) formed of CUL1, SKP1, RBX1 and FBXO33. Interacts via its N-terminus with YBX1 CSD domain. Directly interacts with SKP1 and CUL1.

Its pathway is protein modification; protein ubiquitination. Functionally, substrate recognition component of a SCF (SKP1-CUL1-F-box protein) E3 ubiquitin-protein ligase complex which mediates the ubiquitination and subsequent proteasomal degradation of target proteins. Probably recognizes and binds to phosphorylated target proteins. Recognizes YBX1. The chain is F-box only protein 33 (FBXO33) from Homo sapiens (Human).